The following is a 426-amino-acid chain: Serine--tRNA ligase (426 aa).

Position 227–229 (227–229) interacts with L-serine; that stretch reads TSE. ATP contacts are provided by residues 258–260 and Val274; that span reads RKE. Residue Glu281 coordinates L-serine. 345–348 is a binding site for ATP; that stretch reads ELTS. An L-serine-binding site is contributed by Thr380.

Belongs to the class-II aminoacyl-tRNA synthetase family. Type-1 seryl-tRNA synthetase subfamily. Homodimer. The tRNA molecule binds across the dimer.

It is found in the cytoplasm. It carries out the reaction tRNA(Ser) + L-serine + ATP = L-seryl-tRNA(Ser) + AMP + diphosphate + H(+). It catalyses the reaction tRNA(Sec) + L-serine + ATP = L-seryl-tRNA(Sec) + AMP + diphosphate + H(+). Its pathway is aminoacyl-tRNA biosynthesis; selenocysteinyl-tRNA(Sec) biosynthesis; L-seryl-tRNA(Sec) from L-serine and tRNA(Sec): step 1/1. Functionally, catalyzes the attachment of serine to tRNA(Ser). Is also able to aminoacylate tRNA(Sec) with serine, to form the misacylated tRNA L-seryl-tRNA(Sec), which will be further converted into selenocysteinyl-tRNA(Sec). This chain is Serine--tRNA ligase, found in Clavibacter sepedonicus (Clavibacter michiganensis subsp. sepedonicus).